Here is a 1883-residue protein sequence, read N- to C-terminus: AF4/FMR2 family member lilli (1883 aa).

A compositionally biased stretch (low complexity) spans 1–45 (MAQQQQQQHLQQQQQQHHQQQQLQQLQQQQQLPQYNNNLYNLNYN). Disordered regions lie at residues 1 to 88 (MAQQ…SEGD), 140 to 311 (INST…EKDI), 329 to 381 (SIAA…SCTT), 449 to 540 (MPTP…HHQH), 609 to 654 (LGGG…HLSR), 796 to 827 (SISSGSASGSSSSDSAAGEVVPLPGPGETLQI), 844 to 901 (MQQK…KKHA), 922 to 962 (TAAA…LAKG), 992 to 1018 (VAGSRKREHSSNSSSNGNTPTKKLHAA), 1039 to 1075 (TAAAGSSSDEDSTSSSCSSTKSSNSSSSGSDSEATAT), 1115 to 1145 (KNNRLYGAGSSSNSSSSETEEQQQQQQQHKQ), 1170 to 1238 (QHQQ…KSDK), 1358 to 1413 (YAAE…GART), 1450 to 1510 (EHGV…DQVS), 1543 to 1583 (ANGS…KATT), 1595 to 1641 (QTST…PPSD), and 1783 to 1803 (PSNSVGSQGSGSNTPPGRIVP). A compositionally biased stretch (basic and acidic residues) spans 57–80 (REKYERQQGIQSDDRETSLFEAPR). Composition is skewed to low complexity over residues 140-154 (INSTTTTSSSASLLP), 161-178 (QQQQQQQQQQQQHYQQQQ), 223-253 (SASSSSSASNNNSSSATNNATAAAATSASTA), and 362-381 (PLNSPPAASGASSSSLSCTT). A compositionally biased stretch (pro residues) spans 450–462 (PTPPKASPTPPTA). T458 is modified (phosphothreonine). Residues 466–479 (LKSEKNHSLEKQDS) show a composition bias toward basic and acidic residues. Residues 481-491 (LENDLELSESD) are compositionally biased toward acidic residues. Residues S488 and S490 each carry the phosphoserine modification. Over residues 500-540 (SAGNSSNSSETDSSESGSEASSKGEAQQQQQQQQQLLHHQH) the composition is skewed to low complexity. The segment covering 609 to 625 (LGGGGGSGSTGGGGGSS) has biased composition (gly residues). Composition is skewed to low complexity over residues 626 to 639 (SSGMGNMSSSSSSN) and 796 to 813 (SISSGSASGSSSSDSAAG). A compositionally biased stretch (basic residues) spans 867 to 877 (PRQKKPRKKKM). 2 positions are modified to phosphoserine: S887 and S888. The a.T hook DNA-binding region spans 930–942 (KKGRGRPRKQQQQ). A compositionally biased stretch (low complexity) spans 939–962 (QQQQLQQTQSGNLSSASAGSLAKG). Phosphoserine is present on residues S953 and S955. 5 stretches are compositionally biased toward low complexity: residues 1124–1145 (SSSNSSSSETEEQQQQQQQHKQ), 1170–1186 (QHQQQQPLQPQQQQQQQ), 1200–1222 (SSSSDGSSSSSTDSSSTNSSSSS), 1362–1376 (QQQQQQQHLHTQQLH), and 1385–1399 (HYQQQHQPHQQKAQQ). Basic and acidic residues predominate over residues 1450-1467 (EHGVKPEPELDAGYEAKY). S1546 is subject to Phosphoserine. Phosphothreonine is present on T1548. 2 stretches are compositionally biased toward low complexity: residues 1558–1583 (QQQQHQQQQQQQQHQPQHQQQLKATT) and 1595–1606 (QTSTTATQQPTT). Residues 1614–1625 (TPPPVAPPPPPR) show a composition bias toward pro residues. Over residues 1783–1794 (PSNSVGSQGSGS) the composition is skewed to low complexity.

This sequence belongs to the AF4 family.

Its subcellular location is the nucleus. In terms of biological role, has a role in transcriptional regulation. Acts in parallel with the Ras/MAPK and the PI3K/PKB pathways in the control of cell identity and cellular growth. Essential for regulation of the cytoskeleton and cell growth but not for cell proliferation or growth rate. Required specifically for the microtubule-based basal transport of lipid droplets. Plays a partially redundant function downstream of Raf in cell fate specification in the developing eye. Pair-rule protein that regulates embryonic cellularization, gastrulation and segmentation. This Drosophila grimshawi (Hawaiian fruit fly) protein is AF4/FMR2 family member lilli.